The sequence spans 801 residues: MDTMLKSNPQTQQRSNHNGQETSLWSSSFGMKMEAITPFLGKYRPFMGRCCQTCTPKSWESLFHRSIMDLGFCNVILVKEENTRFRGWLVRRLCYFLWSLEQHIPTSFDASQKIMENTGVQNLLSGRVPGAAGEGQAPELVKKEVQRILGHIQTTPRPFLLRLFSWALLWFLNRLFLNVQLHKGQMKMVQKAVQEGSPLVFLSTHKSLLDGFLLPFVLFSQGLGVVRVALDSRTCSPALRALLRKLGGLFLPPEVNLSLDNSEGILARAVVRATVEELLTSGQPLLIFLEEPPGSPGPRLSALGQAWLGVVIQAVQAGIISDATLVPVAIAYDLVPDAPCNMNHDLAPLGLWTGALAVFRRLCNCWGCNRRVCVRVHLAQPFSLQEYTINARSCWDSRQTLEHLLQPIVLGECSVVPDTEKEQEWTPPTGLLLALKEEDQLLVRRLSRHVLSASVASSAVMSTAIMATLLLLKHQKGVVLSQLLGEFSWLTEETLLRGFDVGFSGQLRCLAQHTLSLLRAHVVLLRVHQGDLVVVPRPGPGLTHLARLSMELLPTFLSEAVGACAVRGLLAGRVPPEGPWELQGIELLSQNELYRQILLLLHLLPQDLLLPQPCQSSYCYCQEVLDRLIQCGLLVAEETPGSRPACDTGRQHLSAKLLWKPSGDFTDSESDDFEEPGGRCFRLSQQSRCPDFFLFLCRLLSPILKAFAQAATFLHLGQLPDSEVAYSEKLFQFLQACAQEEGIFECADPNLAISAVWTFKDLGVLQEMPSPTGPQLHLSPTFATRDNQDKLEQFIRQFICS.

Residues 1 to 24 (MDTMLKSNPQTQQRSNHNGQETSL) are disordered. Residues 1-305 (MDTMLKSNPQ…PGPRLSALGQ (305 aa)) lie on the Cytoplasmic side of the membrane. Residues 180-290 (QLHKGQMKMV…SGQPLLIFLE (111 aa)) are acyltransferase. The HXXXXD motif signature appears at 205-210 (HKSLLD). The helical transmembrane segment at 306 to 332 (AWLGVVIQAVQAGIISDATLVPVAIAY) threads the bilayer. Over 333–449 (DLVPDAPCNM…QLLVRRLSRH (117 aa)) the chain is Mitochondrial intermembrane. A helical transmembrane segment spans residues 450–472 (VLSASVASSAVMSTAIMATLLLL). Over 473-801 (KHQKGVVLSQ…EQFIRQFICS (329 aa)) the chain is Cytoplasmic. Position 662 is a phosphoserine (serine 662). Residue threonine 666 is modified to Phosphothreonine. 2 positions are modified to phosphoserine: serine 668 and serine 670.

This sequence belongs to the GPAT/DAPAT family. In terms of assembly, interacts with PIWIL2. In terms of tissue distribution, highly expressed in the testis. Expressed at lower levels in the heart, liver, kidney, spleen and adipose cells. Only detected in primary spermatocytes.

The protein resides in the mitochondrion outer membrane. The catalysed reaction is sn-glycerol 3-phosphate + an acyl-CoA = a 1-acyl-sn-glycero-3-phosphate + CoA. The enzyme catalyses a 1-acyl-sn-glycero-3-phosphate + an acyl-CoA = a 1,2-diacyl-sn-glycero-3-phosphate + CoA. It carries out the reaction 1-(9Z-octadecenoyl)-sn-glycero-3-phosphate + (9Z)-octadecenoyl-CoA = 1,2-di-(9Z-octadecenoyl)-sn-glycero-3-phosphate + CoA. It catalyses the reaction 1-(9Z-octadecenoyl)-sn-glycero-3-phosphate + (5Z,8Z,11Z,14Z)-eicosatetraenoyl-CoA = 1-(9Z)-octadecenoyl-2-(5Z,8Z,11Z,14Z)-eicosatetraenoyl-sn-glycero-3-phosphate + CoA. The catalysed reaction is (5Z,8Z,11Z,14Z)-eicosatetraenoyl-CoA + sn-glycerol 3-phosphate = 1-(5Z,8Z,11Z,14Z-eicosatetraenoyl)-sn-glycero-3-phosphate + CoA. It participates in phospholipid metabolism; CDP-diacylglycerol biosynthesis; CDP-diacylglycerol from sn-glycerol 3-phosphate: step 1/3. With respect to regulation, inhibited by N-ethylmaleimide (NEM). Functionally, transfers an acyl-group from acyl-ACP to the sn-1 position of glycerol-3-phosphate producing a lysophosphatidic acid (LPA), an essential step for the triacylglycerol (TAG) and glycerophospholipids. In vitro also transfers an acyl-group from acyl-ACP to the LPA producing a phosphatidic acid (PA). Prefers arachidonoyl-CoA as the acyl donor. Required for primary processing step during piRNA biosynthesis. Molecular mechanisms by which it promotes piRNA biosynthesis are unclear and do not involve its acyltransferase activity. The chain is Glycerol-3-phosphate acyltransferase 2, mitochondrial from Mus musculus (Mouse).